The primary structure comprises 217 residues: Choline transport system permease protein OpuBB (217 aa).

One can recognise an ABC transmembrane type-1 domain in the interval 19–198 (TYEHITISLI…ILAIVIDYVL (180 aa)). A run of 6 helical transmembrane segments spans residues 23–43 (ITIS…LGVV), 52–74 (GTII…AFFI), 84–101 (AIVA…RNTY), 128–148 (LVEL…STIY), 150–170 (IGWA…YIFI), and 180–200 (IIGG…VLAV).

Belongs to the binding-protein-dependent transport system permease family. CysTW subfamily.

It is found in the cell membrane. Functionally, involved in a high affinity multicomponent binding-protein-dependent transport system for choline; probably responsible for the translocation of the substrate across the membrane. This chain is Choline transport system permease protein OpuBB (opuBB), found in Bacillus subtilis (strain 168).